The following is a 305-amino-acid chain: Acetyl-coenzyme A carboxylase carboxyl transferase subunit beta (305 aa).

The CoA carboxyltransferase N-terminal domain maps to 25-294 (VWTKCDSCGQ…PGNDDVEIRS (270 aa)). Cys-29, Cys-32, Cys-48, and Cys-51 together coordinate Zn(2+). The segment at 29–51 (CDSCGQVLYRAELERNLGVCPKC) adopts a C4-type zinc-finger fold. The segment at 281–305 (NHPEPGNDDVEIRSDAPSESSQDDA) is disordered.

The protein belongs to the AccD/PCCB family. Acetyl-CoA carboxylase is a heterohexamer composed of biotin carboxyl carrier protein (AccB), biotin carboxylase (AccC) and two subunits each of ACCase subunit alpha (AccA) and ACCase subunit beta (AccD). Zn(2+) serves as cofactor.

The protein localises to the cytoplasm. It carries out the reaction N(6)-carboxybiotinyl-L-lysyl-[protein] + acetyl-CoA = N(6)-biotinyl-L-lysyl-[protein] + malonyl-CoA. It participates in lipid metabolism; malonyl-CoA biosynthesis; malonyl-CoA from acetyl-CoA: step 1/1. Its function is as follows. Component of the acetyl coenzyme A carboxylase (ACC) complex. Biotin carboxylase (BC) catalyzes the carboxylation of biotin on its carrier protein (BCCP) and then the CO(2) group is transferred by the transcarboxylase to acetyl-CoA to form malonyl-CoA. This chain is Acetyl-coenzyme A carboxylase carboxyl transferase subunit beta, found in Pectobacterium atrosepticum (strain SCRI 1043 / ATCC BAA-672) (Erwinia carotovora subsp. atroseptica).